Consider the following 338-residue polypeptide: HTH-type transcriptional regulator SyrM 1 (338 aa).

Residues Leu35–Thr92 enclose the HTH lysR-type domain. The segment at residues Val52–Arg72 is a DNA-binding region (H-T-H motif).

Belongs to the LysR transcriptional regulatory family.

Its function is as follows. Transcriptional activator that regulates the expression of genes involved in symbiosis. Among other targets it acts on the nolWBTUV operon. The polypeptide is HTH-type transcriptional regulator SyrM 1 (syrM1) (Sinorhizobium fredii (strain NBRC 101917 / NGR234)).